Consider the following 131-residue polypeptide: Probable histone H2A.3 (131 aa).

The disordered stretch occupies residues 1 to 23; the sequence is MAGRGKQLGSGAAKKSTSRSSKA. Positions 9–23 are enriched in low complexity; that stretch reads GSGAAKKSTSRSSKA.

This sequence belongs to the histone H2A family. In terms of assembly, the nucleosome is a histone octamer containing two molecules each of H2A, H2B, H3 and H4 assembled in one H3-H4 heterotetramer and two H2A-H2B heterodimers. The octamer wraps approximately 147 bp of DNA. Not ubiquitinated. As to expression, expressed in meristems and dividing cells.

It is found in the nucleus. It localises to the chromosome. Core component of nucleosome. Nucleosomes wrap and compact DNA into chromatin, limiting DNA accessibility to the cellular machineries which require DNA as a template. Histones thereby play a central role in transcription regulation, DNA repair, DNA replication and chromosomal stability. DNA accessibility is regulated via a complex set of post-translational modifications of histones, also called histone code, and nucleosome remodeling. The sequence is that of Probable histone H2A.3 from Arabidopsis thaliana (Mouse-ear cress).